The chain runs to 528 residues: Protein MGF 505-7R (528 aa).

ANK repeat units follow at residues 54-83 (SINDALLLAGEEGDTDVVQLLLLWEGNLHY) and 261-291 (NIHRALSYAVSHNRRKILDYLIRQKNIPPNT).

This sequence belongs to the asfivirus MGF 505 family. As to quaternary structure, interacts with host STING1. Interacts with host JAK1; this interaction leads to JAK1 degradation. Interacts with host JAK2; this interaction leads to JAK2 degradation. Interacts with host RELA; this interaction inhibits NF-kappa-B promoter activity.

It localises to the host cytoplasm. Functionally, plays a role in virus cell tropism, and may be required for efficient virus replication in macrophages. Interferes with host NF-kappa-B promoter activity mediated by TLR8. Mechanistically, inhibits the phosphorylation and subsequent nuclear translocation of host NF-kappa-B RELA subunit downstream of TLR8. Promotes the expression of the autophagy-related protein host ULK1 to degrade host STING and inhibit the interferon response. Also inhibits JAK1- and JAK2-mediated signaling and thus negatively regulates the IFN-gamma signaling. This chain is Protein MGF 505-7R, found in African swine fever virus (isolate Tick/Malawi/Lil 20-1/1983) (ASFV).